The following is a 103-amino-acid chain: NADH-quinone oxidoreductase subunit K (103 aa).

Helical transmembrane passes span 7–27, 31–51, and 65–85; these read TEHG…GVLV, LIFM…AFIV, and FMLI…LILL.

The protein belongs to the complex I subunit 4L family. In terms of assembly, NDH-1 is composed of 14 different subunits. Subunits NuoA, H, J, K, L, M, N constitute the membrane sector of the complex.

It localises to the cell inner membrane. It carries out the reaction a quinone + NADH + 5 H(+)(in) = a quinol + NAD(+) + 4 H(+)(out). NDH-1 shuttles electrons from NADH, via FMN and iron-sulfur (Fe-S) centers, to quinones in the respiratory chain. The immediate electron acceptor for the enzyme in this species is believed to be ubiquinone. Couples the redox reaction to proton translocation (for every two electrons transferred, four hydrogen ions are translocated across the cytoplasmic membrane), and thus conserves the redox energy in a proton gradient. The chain is NADH-quinone oxidoreductase subunit K from Nitrosococcus oceani (strain ATCC 19707 / BCRC 17464 / JCM 30415 / NCIMB 11848 / C-107).